Reading from the N-terminus, the 129-residue chain is Thylakoid-associated single-stranded DNA-binding protein slr1034 (129 aa).

In terms of domain architecture, SSB spans 1-100 (MNSFVLMATV…LTASRISLVD (100 aa)). The interval 99–129 (VDSGNGINPGELSSPPEPEAVDLSNTDDIPF) is disordered.

Homotetramer.

The protein resides in the cellular thylakoid membrane. This chain is Thylakoid-associated single-stranded DNA-binding protein slr1034, found in Synechocystis sp. (strain ATCC 27184 / PCC 6803 / Kazusa).